The sequence spans 138 residues: Acidic phospholipase A2 2 (138 aa).

Residues 1 to 16 (MRTLWIVAVLLLGVEG) form the signal peptide. Intrachain disulfides connect cysteine 42-cysteine 131, cysteine 44-cysteine 60, cysteine 59-cysteine 111, cysteine 65-cysteine 138, cysteine 66-cysteine 104, cysteine 73-cysteine 97, and cysteine 91-cysteine 102. Ca(2+) contacts are provided by tyrosine 43, glycine 45, and glycine 47. Residue histidine 63 is part of the active site. Aspartate 64 is a binding site for Ca(2+). Residue aspartate 105 is part of the active site.

It belongs to the phospholipase A2 family. Group II subfamily. D49 sub-subfamily. The cofactor is Ca(2+). As to expression, expressed by the venom gland.

The protein localises to the secreted. The enzyme catalyses a 1,2-diacyl-sn-glycero-3-phosphocholine + H2O = a 1-acyl-sn-glycero-3-phosphocholine + a fatty acid + H(+). Functionally, snake venom phospholipase A2 (PLA2) that displays edema-inducing activities, exhibits indirect hemolytic activity, and inhibits ADP-induced platelet aggregation. PLA2 catalyzes the calcium-dependent hydrolysis of the 2-acyl groups in 3-sn-phosphoglycerides. The protein is Acidic phospholipase A2 2 of Protobothrops mucrosquamatus (Taiwan habu).